Here is an 8892-residue protein sequence, read N- to C-terminus: Nonribosomal peptide synthetase 32 (8892 aa).

The 74-residue stretch at 12–85 (EPSKLVLGRV…QLAESIAQQN (74 aa)) folds into the Carrier 1 domain. Ser-46 is subject to O-(pantetheine 4'-phosphoryl)serine. Positions 88–112 (AGNGVNGHANGNGMNGNGLHNEATI) are disordered. The span at 93-108 (NGHANGNGMNGNGLHN) shows a compositional bias: low complexity. Residues 567–956 (PTSANVPRRV…EGVDLSVRDF (390 aa)) form a condensation 1 region. An adenylation 1 region spans residues 989–1386 (KMAEQPEALA…GRIDSQIKIR (398 aa)). The Carrier 2 domain occupies 1523–1599 (ISATAVEREL…ELAAEVQATQ (77 aa)). Residue Ser-1560 is modified to O-(pantetheine 4'-phosphoryl)serine. The interval 1609–2039 (GAIALSPIQQ…YGQTVKSLVN (431 aa)) is epimerization 1. The tract at residues 2083–2518 (EDILPCSPIQ…LLLPAEEAKL (436 aa)) is condensation 2. Residues 2543–2934 (SQPEALAVSA…GRRDTQVKIR (392 aa)) form an adenylation 2 region. One can recognise a Carrier 3 domain in the interval 3061–3137 (SSATPIEREL…ELAANSQTGR (77 aa)). Ser-3098 is modified (O-(pantetheine 4'-phosphoryl)serine). The tract at residues 3153–3590 (LSPIQQMFFD…GDTVKTLVEE (438 aa)) is epimerization 2. A condensation 3 region spans residues 3634–4061 (EDILPCSAIQ…NVDRPLRELT (428 aa)). Positions 4098-4488 (TLPEALAISS…GRIDSQIKIR (391 aa)) are adenylation 3. Residues 4627-4703 (APTTDLERKL…DLSRVVEEKC (77 aa)) form the Carrier 4 domain. Position 4664 is an O-(pantetheine 4'-phosphoryl)serine (Ser-4664). A condensation 4 region spans residues 4760-5181 (EDVYPCSPMQ…LLTDEDCDQL (422 aa)). Residues 5205-5605 (TSYPTAPAIS…GRRDTQVKIR (401 aa)) are adenylation 4. Residues 5745–5821 (MPTTPMEQKL…DLAEAMEEKG (77 aa)) form the Carrier 5 domain. O-(pantetheine 4'-phosphoryl)serine is present on Ser-5782. The segment at 5868 to 6285 (EDVYPCSPLQ…LLSPGQMAQI (418 aa)) is condensation 5. The adenylation 5 stretch occupies residues 6307–6700 (QMTTRPAATA…GRIDTQIKIR (394 aa)). In terms of domain architecture, Carrier 6 spans 6834 to 6911 (ELTTTIERQL…ELATQTQTTE (78 aa)). Ser-6872 carries the O-(pantetheine 4'-phosphoryl)serine modification. Positions 6923–7360 (NFQLSPIQQM…SYSCAIESLV (438 aa)) are epimerization 3. The interval 7403-7834 (VQDILPCSPI…LLPAGDANQI (432 aa)) is condensation 6. Positions 7855 to 8253 (QQMAAHPTAQ…LDRIGTQVKI (399 aa)) are adenylation 6. The Carrier 7 domain maps to 8380 to 8456 (APVGRNEEIL…AMAARVTADI (77 aa)). Residue Ser-8417 is modified to O-(pantetheine 4'-phosphoryl)serine. The interval 8490–8878 (HFAFDATGPC…EIIEDSGCNV (389 aa)) is condensation 7.

Belongs to the NRP synthetase family.

It participates in secondary metabolite biosynthesis. Functionally, nonribosomal peptide synthetase; part of the gene cluster that mediates the biosynthesis of the lipopeptides W493 A and B. W493 A and B consist of six amino acid residues D-allo-thr, L-Ala, D-Ala, L-Gln, D-Tyr, and L-Val/L-Ile linked to a 3-hydroxy-4-methyltetradecanoic acid polyketide chain. The biosynthesis starts with formation of the linear polyketide chain by the highly reducing polyketide synthase PKS40. The gene cluster contains a putative acyl-CoA ligase (FPSE_09184) for formation of a CoA thioester polyketide. The thiol bond could be hydrolyzed by the putative thioesterase (FPSE_09186) and then accepted by the first T domain in module 1 of NRPS32. The second T domain is responsible for accepting a threonine, which is adenylated by the A domain and epimerized to the D-allo-threonine formed by the E domain. The five successive modules incorporate Ala, Ala, Gln, Tyr, and Val/Ile into the final product, which is released by cyclization. In Fusarium pseudograminearum (strain CS3096) (Wheat and barley crown-rot fungus), this protein is Nonribosomal peptide synthetase 32.